The primary structure comprises 312 residues: Methionyl-tRNA formyltransferase (312 aa).

109–112 (SLLP) serves as a coordination point for (6S)-5,6,7,8-tetrahydrofolate.

Belongs to the Fmt family.

It catalyses the reaction L-methionyl-tRNA(fMet) + (6R)-10-formyltetrahydrofolate = N-formyl-L-methionyl-tRNA(fMet) + (6S)-5,6,7,8-tetrahydrofolate + H(+). Its function is as follows. Attaches a formyl group to the free amino group of methionyl-tRNA(fMet). The formyl group appears to play a dual role in the initiator identity of N-formylmethionyl-tRNA by promoting its recognition by IF2 and preventing the misappropriation of this tRNA by the elongation apparatus. The sequence is that of Methionyl-tRNA formyltransferase from Nitrosospira multiformis (strain ATCC 25196 / NCIMB 11849 / C 71).